The sequence spans 51 residues: Small integral membrane protein 38 (51 aa).

The helical transmembrane segment at 13 to 33 (PLLALLVVILLARLILWSCLG) threads the bilayer.

Its subcellular location is the membrane. The chain is Small integral membrane protein 38 from Homo sapiens (Human).